We begin with the raw amino-acid sequence, 501 residues long: 25-hydroxyvitamin D-1 alpha hydroxylase, mitochondrial (501 aa).

Heme is bound at residue Cys-448.

Belongs to the cytochrome P450 family. Heme is required as a cofactor. In terms of tissue distribution, kidney.

The protein localises to the mitochondrion membrane. The catalysed reaction is calcidiol + 2 reduced [adrenodoxin] + O2 + 2 H(+) = calcitriol + 2 oxidized [adrenodoxin] + H2O. The enzyme catalyses secalciferol + 2 reduced [adrenodoxin] + O2 + 2 H(+) = calcitetrol + 2 oxidized [adrenodoxin] + H2O. It participates in hormone biosynthesis; cholecalciferol biosynthesis. In terms of biological role, catalyzes the conversion of 25-hydroxyvitamin D3 (25(OH)D3) to 1-alpha,25-dihydroxyvitamin D3 (1alpha,25(OH)(2)D3), and of 24,25-dihydroxyvitamin D3 (24,25(OH)(2)D3) to 1-alpha,24,25-trihydroxyvitamin D3 (1alpha,24,25(OH)(3)D3). Is also active with 25-hydroxy-24-oxo-vitamin D3. Plays an important role in normal bone growth, calcium metabolism, and tissue differentiation. In Rattus norvegicus (Rat), this protein is 25-hydroxyvitamin D-1 alpha hydroxylase, mitochondrial (Cyp27b1).